A 455-amino-acid chain; its full sequence is UDP-glycosyltransferase 2 (455 aa).

Belongs to the UDP-glycosyltransferase family.

It carries out the reaction exophillate + UDP-alpha-D-galactose = phaeomoniecin D + UDP + H(+). It functions in the pathway secondary metabolite biosynthesis. Its function is as follows. Catalyzes the second glycosylation step during phaeomoniecin D biosynthesis, the further O-galactosylation of exophillic acid (produced by the O-glycosyltransferase OGT1) to yield the 4-O-beta-D-galactoside phaeomoniecin D. The sequence is that of UDP-glycosyltransferase 2 from Phaeomoniella chlamydospora (Phaeoacremonium chlamydosporum).